Reading from the N-terminus, the 371-residue chain is Histidinol-phosphate aminotransferase (371 aa).

K221 is modified (N6-(pyridoxal phosphate)lysine).

This sequence belongs to the class-II pyridoxal-phosphate-dependent aminotransferase family. Histidinol-phosphate aminotransferase subfamily. As to quaternary structure, homodimer. It depends on pyridoxal 5'-phosphate as a cofactor.

The catalysed reaction is L-histidinol phosphate + 2-oxoglutarate = 3-(imidazol-4-yl)-2-oxopropyl phosphate + L-glutamate. It participates in amino-acid biosynthesis; L-histidine biosynthesis; L-histidine from 5-phospho-alpha-D-ribose 1-diphosphate: step 7/9. This chain is Histidinol-phosphate aminotransferase, found in Pseudoalteromonas atlantica (strain T6c / ATCC BAA-1087).